An 815-amino-acid chain; its full sequence is Bifunctional purine biosynthetic protein purD (815 aa).

Positions 6-452 (NILVIGSGSR…YRKDIGQKAL (447 aa)) are GARS. An ATP-grasp domain is found at 113-343 (KDFMARNNIP…LFEIVLACIE (231 aa)). 139–200 (IESLNYKIVL…EEFLDGEECS (62 aa)) contacts ATP. Mg(2+) is bound by residues Glu313 and Asn315. The tract at residues 469 to 801 (VSYSESGVDI…KVYKIGKIIN (333 aa)) is AIRS.

In the N-terminal section; belongs to the GARS family. The protein in the C-terminal section; belongs to the AIR synthase family. The cofactor is Mg(2+). Mn(2+) is required as a cofactor.

It is found in the cytoplasm. The protein resides in the cytosol. It carries out the reaction 5-phospho-beta-D-ribosylamine + glycine + ATP = N(1)-(5-phospho-beta-D-ribosyl)glycinamide + ADP + phosphate + H(+). The enzyme catalyses 2-formamido-N(1)-(5-O-phospho-beta-D-ribosyl)acetamidine + ATP = 5-amino-1-(5-phospho-beta-D-ribosyl)imidazole + ADP + phosphate + H(+). The protein operates within purine metabolism; IMP biosynthesis via de novo pathway; 5-amino-1-(5-phospho-D-ribosyl)imidazole from N(2)-formyl-N(1)-(5-phospho-D-ribosyl)glycinamide: step 2/2. It functions in the pathway purine metabolism; IMP biosynthesis via de novo pathway; N(1)-(5-phospho-D-ribosyl)glycinamide from 5-phospho-alpha-D-ribose 1-diphosphate: step 2/2. Functionally, catalyzes the second and fifth step in the 'de novo' purine biosynthesis pathway; contains phosphoribosylamine--glycine ligase (GARS) and phosphoribosylformylglycinamidine cyclo-ligase (AIRS) activities. In Dictyostelium discoideum (Social amoeba), this protein is Bifunctional purine biosynthetic protein purD (purD).